Here is a 147-residue protein sequence, read N- to C-terminus: MVEWTDDERAIINGIFSNLDYEEIGRKSLCRCLIVYPWTQRYFGGFGNLYNAETILCNPLIAAHGTKILHGLDRALKNMDDIKNTYAELSLLHSDKLHVDPDNFRLLADCLTVVIAAKMGAAFTVDTQVAWQKFLAVVVSALGRQYH.

In terms of domain architecture, Globin spans 3–147; the sequence is EWTDDERAII…VVSALGRQYH (145 aa). Residues His-64 and His-93 each coordinate heme b.

This sequence belongs to the globin family. In terms of assembly, heterotetramer of two alpha chains and two beta chains. As to expression, red blood cells.

Functionally, involved in oxygen transport from gills to the various peripheral tissues. The sequence is that of Hemoglobin subunit beta (hbb) from Melanogrammus aeglefinus (Haddock).